The sequence spans 439 residues: Xylose isomerase (439 aa).

Catalysis depends on residues histidine 101 and aspartate 104. Residues glutamate 232, glutamate 268, histidine 271, aspartate 296, aspartate 307, aspartate 309, and aspartate 339 each contribute to the Mg(2+) site.

The protein belongs to the xylose isomerase family. As to quaternary structure, homotetramer. Mg(2+) is required as a cofactor.

It is found in the cytoplasm. It catalyses the reaction alpha-D-xylose = alpha-D-xylulofuranose. This is Xylose isomerase from Actinobacillus pleuropneumoniae serotype 5b (strain L20).